Consider the following 120-residue polypeptide: Small ribosomal subunit protein uS19 (120 aa).

Belongs to the universal ribosomal protein uS19 family.

In Naegleria gruberi (Amoeba), this protein is Small ribosomal subunit protein uS19 (RPS15).